The primary structure comprises 461 residues: Argininosuccinate lyase (461 aa).

It belongs to the lyase 1 family. Argininosuccinate lyase subfamily.

It is found in the cytoplasm. It carries out the reaction 2-(N(omega)-L-arginino)succinate = fumarate + L-arginine. It functions in the pathway amino-acid biosynthesis; L-arginine biosynthesis; L-arginine from L-ornithine and carbamoyl phosphate: step 3/3. Strongly inhibited by L-arginine. Inhibitory effects are lowered at pH 7.0 compared to those at pH 8.0. At 42 degrees Celsius and pH 8.0, activity decreases to 77% and 25% in the presence of 1 mM and 10 mM arginine, respectively. The other amino and organic acids do not affect activity. Functionally, catalyzes the last step of arginine biosynthesis, the conversion of argininosuccinate into L-arginine and fumarate. The sequence is that of Argininosuccinate lyase from Nostoc sp. (strain PCC 7120 / SAG 25.82 / UTEX 2576).